Reading from the N-terminus, the 112-residue chain is MQNIKLEKREQDILINISRIISEEVQNLKDVLTTVVGIKLSSDLSHCNVYVTFSKNSKKNLERLNQASGYIKKQLSSILKWRKIPSLHFKIDDTFEKSLKIEQILEEIKKEK.

Belongs to the RbfA family. As to quaternary structure, monomer. Binds 30S ribosomal subunits, but not 50S ribosomal subunits or 70S ribosomes.

The protein resides in the cytoplasm. In terms of biological role, one of several proteins that assist in the late maturation steps of the functional core of the 30S ribosomal subunit. Associates with free 30S ribosomal subunits (but not with 30S subunits that are part of 70S ribosomes or polysomes). Required for efficient processing of 16S rRNA. May interact with the 5'-terminal helix region of 16S rRNA. The sequence is that of Ribosome-binding factor A from Mycoplasmopsis pulmonis (strain UAB CTIP) (Mycoplasma pulmonis).